The sequence spans 374 residues: Lipopolysaccharide glucosyltransferase WaaG (374 aa).

UDP-alpha-D-glucose is bound by residues G15 and D19. The membrane-interacting region stretch occupies residues 103-132 (YAEKVAQEKGFLYRLTSRYRHYAAFERATF). Positions 173, 208, 209, 261, 281, 283, 284, 285, 286, and 289 each coordinate UDP-alpha-D-glucose.

It belongs to the glycosyltransferase group 1 family. Glycosyltransferase 4 subfamily.

The protein resides in the cell inner membrane. It functions in the pathway bacterial outer membrane biogenesis; LPS core biosynthesis. With respect to regulation, inhibited by divalent metal ions such as Mg(2+), Mn(2+), Ca(2+), Zn(2+), Co(2+), Ni(2+) and Cu(2+). Its function is as follows. Glucosyltransferase involved in the biosynthesis of the core oligosaccharide region of lipopolysaccharide (LPS). Catalyzes the addition of the first outer-core glucose from UDP-glucose to the inner-core heptose II. Cannot use other sugar donors, such as UDP-galactose, UDP-glucuronic acid, UDP-galacuronic acid, GDP-mannose, ADP-glucose and GDP-glucose. In the absence of a lipid acceptor, can slowly hydrolyze UDP-glucose. This chain is Lipopolysaccharide glucosyltransferase WaaG, found in Escherichia coli (strain K12).